The sequence spans 245 residues: tRNA pseudouridine synthase A (245 aa).

The active-site Nucleophile is the Asp52. Tyr111 serves as a coordination point for substrate.

The protein belongs to the tRNA pseudouridine synthase TruA family. As to quaternary structure, homodimer.

The catalysed reaction is uridine(38/39/40) in tRNA = pseudouridine(38/39/40) in tRNA. Functionally, formation of pseudouridine at positions 38, 39 and 40 in the anticodon stem and loop of transfer RNAs. In Rhodopseudomonas palustris (strain BisB5), this protein is tRNA pseudouridine synthase A.